A 117-amino-acid chain; its full sequence is Ig lambda-1 chain V region (117 aa).

Positions 1 to 20 are cleaved as a signal peptide; that stretch reads MAWISLILSLLALSSGGAIS. Position 21 is a pyrrolidone carboxylic acid (Q21). The 97-residue stretch at 21–117 folds into the Ig-like domain; sequence QAVVTQESAL…YFCALWYSNH (97 aa).

In Mus musculus (Mouse), this protein is Ig lambda-1 chain V region.